The primary structure comprises 204 residues: Casparian strip membrane protein 2 (204 aa).

At 1–42 (MKNESTTIDVPAESSSAMKGKAPLIGVARDHTTSGSGGYNRG) the chain is on the cytoplasmic side. The helical transmembrane segment at 43–63 (LSIFDFLLRLAAIVAALAAAA) threads the bilayer. The Extracellular portion of the chain corresponds to 64–92 (TMGTSDETLPFFTQFLQFEASYDDLPTFQ). The helical transmembrane segment at 93-113 (FFVIAMALVGGYLVLSLPISV) threads the bilayer. Residues 114-125 (VTILRPLATAPR) are Cytoplasmic-facing. Residues 126 to 146 (LLLLVLDTAVLALNTAAASSA) traverse the membrane as a helical segment. The Extracellular portion of the chain corresponds to 147-178 (AAISYLAHSGNQNTNWLPICQQFGDFCQKSSG). Residues 179 to 199 (AVVSAFISVVFFTILVVISGV) traverse the membrane as a helical segment. Over 200-204 (ALKRH) the chain is Cytoplasmic.

The protein belongs to the Casparian strip membrane proteins (CASP) family. In terms of assembly, homodimer and heterodimers.

The protein resides in the cell membrane. Functionally, regulates membrane-cell wall junctions and localized cell wall deposition. Required for establishment of the Casparian strip membrane domain (CSD) and the subsequent formation of Casparian strips, a cell wall modification of the root endodermis that determines an apoplastic barrier between the intraorganismal apoplasm and the extraorganismal apoplasm and prevents lateral diffusion. The protein is Casparian strip membrane protein 2 of Arabidopsis lyrata subsp. lyrata (Lyre-leaved rock-cress).